A 686-amino-acid chain; its full sequence is MAM domain-containing protein 2 (686 aa).

The N-terminal stretch at Met-1–Ala-18 is a signal peptide. MAM domains follow at residues Gly-24–Glu-169, Ile-168–Asn-329, Ala-340–Ser-498, and Gly-507–Glu-666. Asn-134 and Asn-329 each carry an N-linked (GlcNAc...) asparagine glycan. Disordered regions lie at residues Glu-521 to Lys-543 and Gly-665 to Tyr-686. An N-linked (GlcNAc...) asparagine glycan is attached at Asn-524.

In terms of processing, O-glycosylated.

Its subcellular location is the secreted. The protein resides in the extracellular space. It localises to the extracellular matrix. The chain is MAM domain-containing protein 2 (MAMDC2) from Homo sapiens (Human).